A 317-amino-acid chain; its full sequence is Methionyl-tRNA formyltransferase (317 aa).

Residue 111–114 coordinates (6S)-5,6,7,8-tetrahydrofolate; the sequence is SLLP.

It belongs to the Fmt family.

The enzyme catalyses L-methionyl-tRNA(fMet) + (6R)-10-formyltetrahydrofolate = N-formyl-L-methionyl-tRNA(fMet) + (6S)-5,6,7,8-tetrahydrofolate + H(+). Its function is as follows. Attaches a formyl group to the free amino group of methionyl-tRNA(fMet). The formyl group appears to play a dual role in the initiator identity of N-formylmethionyl-tRNA by promoting its recognition by IF2 and preventing the misappropriation of this tRNA by the elongation apparatus. This chain is Methionyl-tRNA formyltransferase, found in Chlorobium phaeobacteroides (strain BS1).